We begin with the raw amino-acid sequence, 188 residues long: Elongation factor P (188 aa).

The residue at position 34 (Lys34) is an N6-(3,6-diaminohexanoyl)-5-hydroxylysine.

It belongs to the elongation factor P family. In terms of processing, may be beta-lysylated on the epsilon-amino group of Lys-34 by the combined action of EpmA and EpmB, and then hydroxylated on the C5 position of the same residue by EpmC (if this protein is present). Lysylation is critical for the stimulatory effect of EF-P on peptide-bond formation. The lysylation moiety may extend toward the peptidyltransferase center and stabilize the terminal 3-CCA end of the tRNA. Hydroxylation of the C5 position on Lys-34 may allow additional potential stabilizing hydrogen-bond interactions with the P-tRNA.

It is found in the cytoplasm. The protein operates within protein biosynthesis; polypeptide chain elongation. Its function is as follows. Involved in peptide bond synthesis. Alleviates ribosome stalling that occurs when 3 or more consecutive Pro residues or the sequence PPG is present in a protein, possibly by augmenting the peptidyl transferase activity of the ribosome. Modification of Lys-34 is required for alleviation. In Histophilus somni (strain 129Pt) (Haemophilus somnus), this protein is Elongation factor P.